The chain runs to 163 residues: Phosphopantetheine adenylyltransferase (163 aa).

A substrate-binding site is contributed by Ser-9. ATP-binding positions include 9–10 (SF) and His-17. 3 residues coordinate substrate: Lys-41, Leu-73, and Lys-87. ATP-binding positions include 88-90 (GLR), Glu-98, and 124-130 (YTYVSST).

This sequence belongs to the bacterial CoaD family. Homohexamer. Mg(2+) is required as a cofactor.

The protein resides in the cytoplasm. It catalyses the reaction (R)-4'-phosphopantetheine + ATP + H(+) = 3'-dephospho-CoA + diphosphate. The protein operates within cofactor biosynthesis; coenzyme A biosynthesis; CoA from (R)-pantothenate: step 4/5. In terms of biological role, reversibly transfers an adenylyl group from ATP to 4'-phosphopantetheine, yielding dephospho-CoA (dPCoA) and pyrophosphate. The protein is Phosphopantetheine adenylyltransferase of Fusobacterium nucleatum subsp. nucleatum (strain ATCC 25586 / DSM 15643 / BCRC 10681 / CIP 101130 / JCM 8532 / KCTC 2640 / LMG 13131 / VPI 4355).